The primary structure comprises 457 residues: Exodeoxyribonuclease 7 large subunit (457 aa).

This sequence belongs to the XseA family. As to quaternary structure, heterooligomer composed of large and small subunits.

It localises to the cytoplasm. It catalyses the reaction Exonucleolytic cleavage in either 5'- to 3'- or 3'- to 5'-direction to yield nucleoside 5'-phosphates.. Its function is as follows. Bidirectionally degrades single-stranded DNA into large acid-insoluble oligonucleotides, which are then degraded further into small acid-soluble oligonucleotides. In Cronobacter sakazakii (strain ATCC BAA-894) (Enterobacter sakazakii), this protein is Exodeoxyribonuclease 7 large subunit.